Reading from the N-terminus, the 428-residue chain is Serine--tRNA ligase (428 aa).

231-233 (TAE) is an L-serine binding site. Residue 262 to 264 (RSE) participates in ATP binding. Residue Glu-285 coordinates L-serine. Position 349–352 (349–352 (EISS)) interacts with ATP. Ser-385 is a binding site for L-serine.

This sequence belongs to the class-II aminoacyl-tRNA synthetase family. Type-1 seryl-tRNA synthetase subfamily. Homodimer. The tRNA molecule binds across the dimer.

Its subcellular location is the cytoplasm. The catalysed reaction is tRNA(Ser) + L-serine + ATP = L-seryl-tRNA(Ser) + AMP + diphosphate + H(+). It carries out the reaction tRNA(Sec) + L-serine + ATP = L-seryl-tRNA(Sec) + AMP + diphosphate + H(+). It participates in aminoacyl-tRNA biosynthesis; selenocysteinyl-tRNA(Sec) biosynthesis; L-seryl-tRNA(Sec) from L-serine and tRNA(Sec): step 1/1. In terms of biological role, catalyzes the attachment of serine to tRNA(Ser). Is also able to aminoacylate tRNA(Sec) with serine, to form the misacylated tRNA L-seryl-tRNA(Sec), which will be further converted into selenocysteinyl-tRNA(Sec). This chain is Serine--tRNA ligase, found in Staphylococcus epidermidis (strain ATCC 35984 / DSM 28319 / BCRC 17069 / CCUG 31568 / BM 3577 / RP62A).